The following is a 249-amino-acid chain: 1-(5-phosphoribosyl)-5-[(5-phosphoribosylamino)methylideneamino] imidazole-4-carboxamide isomerase (249 aa).

Aspartate 8 functions as the Proton acceptor in the catalytic mechanism. Aspartate 131 (proton donor) is an active-site residue.

Belongs to the HisA/HisF family.

The protein localises to the cytoplasm. The catalysed reaction is 1-(5-phospho-beta-D-ribosyl)-5-[(5-phospho-beta-D-ribosylamino)methylideneamino]imidazole-4-carboxamide = 5-[(5-phospho-1-deoxy-D-ribulos-1-ylimino)methylamino]-1-(5-phospho-beta-D-ribosyl)imidazole-4-carboxamide. It functions in the pathway amino-acid biosynthesis; L-histidine biosynthesis; L-histidine from 5-phospho-alpha-D-ribose 1-diphosphate: step 4/9. This chain is 1-(5-phosphoribosyl)-5-[(5-phosphoribosylamino)methylideneamino] imidazole-4-carboxamide isomerase, found in Aromatoleum aromaticum (strain DSM 19018 / LMG 30748 / EbN1) (Azoarcus sp. (strain EbN1)).